The primary structure comprises 277 residues: Myelin proteolipid protein (277 aa).

Residues 1 to 10 lie on the Cytoplasmic side of the membrane; that stretch reads MGLLECCARC. 3 S-palmitoyl cysteine lipidation sites follow: C6, C7, and C10. The helical transmembrane segment at 11–36 threads the bilayer; it reads LVGAPFASLVATGLCFFGVALFCGCG. Residues 37 to 59 are Extracellular-facing; that stretch reads HEALTGTEKLIETYFSKNYQDYE. The helical transmembrane segment at 60–88 threads the bilayer; it reads YLINVIHAFQYVIYGTASFFFLYGALLLA. The Cytoplasmic portion of the chain corresponds to 89–151; sequence EGFYTTGAVR…LGKWLGHPDK (63 aa). Residue C109 is the site of S-palmitoyl cysteine attachment. S114 bears the Phosphoserine mark. T116 and T118 each carry phosphothreonine. C141 carries the S-palmitoyl cysteine lipid modification. The helical transmembrane segment at 152–178 threads the bilayer; sequence FVGITYALTVVWLLVFACSAVPVYIYF. Over 179–238 the chain is Extracellular; that stretch reads NTWTTCQSIAFPSKTSASIGSLCADARMYGVLPWNAFPGKVCGSNLLSICKTAEFQMTFH. Disulfide bonds link C184-C228 and C201-C220. S199 is lipidated: O-palmitoyl serine. A helical membrane pass occupies residues 239–268; it reads LFIAAFVGAAATLISLLTFMIAATYNFAVL. Topologically, residues 269-277 are cytoplasmic; it reads KLMGRGTKF.

Belongs to the myelin proteolipid protein family.

The protein localises to the cell membrane. It localises to the myelin membrane. Functionally, this is the major myelin protein from the central nervous system. It plays an important role in the formation or maintenance of the multilamellar structure of myelin. The chain is Myelin proteolipid protein (PLP1) from Macaca fascicularis (Crab-eating macaque).